A 292-amino-acid polypeptide reads, in one-letter code: ATP synthase gamma chain (292 aa).

Belongs to the ATPase gamma chain family. In terms of assembly, F-type ATPases have 2 components, CF(1) - the catalytic core - and CF(0) - the membrane proton channel. CF(1) has five subunits: alpha(3), beta(3), gamma(1), delta(1), epsilon(1). CF(0) has three main subunits: a, b and c.

It is found in the cell membrane. Its function is as follows. Produces ATP from ADP in the presence of a proton gradient across the membrane. The gamma chain is believed to be important in regulating ATPase activity and the flow of protons through the CF(0) complex. This is ATP synthase gamma chain from Prosthecochloris aestuarii (strain DSM 271 / SK 413).